Reading from the N-terminus, the 1659-residue chain is Vitellogenin (1659 aa).

The N-terminal stretch at 1–15 is a signal peptide; the sequence is MRAVVLALTLALVAS. A Vitellogenin domain is found at 24-662; it reads FAASKTYVYK…DAATLFPRTV (639 aa). A glycan (N-linked (GlcNAc...) asparagine) is linked at N1089. Composition is skewed to low complexity over residues 1090–1111 and 1119–1129; these read GTRASSSSSSSSSSSSRSSSSR and SSSSSSSSSSR. Residues 1090-1163 form a disordered region; sequence GTRASSSSSS…SQSTSNVISR (74 aa). A VWFD domain is found at 1389–1565; sequence VKCSMVRDTL…SWVLPSDSCR (177 aa). Disulfide bonds link C1391–C1528 and C1414–C1564. N1627 is a glycosylation site (N-linked (GlcNAc...) asparagine).

In terms of processing, phosvitin, an egg yolk storage protein, is one of the most highly phosphorylated (10%) proteins in nature. Produced by the liver, secreted into the blood and then sequestered by receptor mediated endocytosis into growing oocytes, where it is generally cleaved, giving rise to the respective yolk components lipovitellin-I, phosvitin, lipovitellin-II.

Precursor of the major egg-yolk proteins that are sources of nutrients during early development of oviparous organisms. The sequence is that of Vitellogenin (vtg1) from Oncorhynchus mykiss (Rainbow trout).